Consider the following 468-residue polypeptide: ATP synthase subunit beta (468 aa).

155 to 162 provides a ligand contact to ATP; the sequence is GGAGVGKT.

Belongs to the ATPase alpha/beta chains family. F-type ATPases have 2 components, CF(1) - the catalytic core - and CF(0) - the membrane proton channel. CF(1) has five subunits: alpha(3), beta(3), gamma(1), delta(1), epsilon(1). CF(0) has three main subunits: a(1), b(2) and c(9-12). The alpha and beta chains form an alternating ring which encloses part of the gamma chain. CF(1) is attached to CF(0) by a central stalk formed by the gamma and epsilon chains, while a peripheral stalk is formed by the delta and b chains.

Its subcellular location is the cell membrane. The catalysed reaction is ATP + H2O + 4 H(+)(in) = ADP + phosphate + 5 H(+)(out). Functionally, produces ATP from ADP in the presence of a proton gradient across the membrane. The catalytic sites are hosted primarily by the beta subunits. The polypeptide is ATP synthase subunit beta (Streptococcus suis (strain 98HAH33)).